The primary structure comprises 220 residues: Botcinic acid biosynthesis cluster B protein 12 (220 aa).

The protein operates within polyketide biosynthesis. Its function is as follows. Part of the gene cluster B that mediates the biosynthesis of botcinic acid and its botcinin derivatives, acetate-derived polyketides that contribute to virulence when combined with the sesquiterpene botrydial. Botcinic acid and its derivatives have been shown to induce chlorosis and necrosis during host plant infection, but also have antifungal activities. Two polyketide synthases, BOA6 and BOA9, are involved in the biosynthesis of botcinins. BOA6 mediates the formation of the per-methylated tetraketide core by condensation of four units of malonyl-CoA with one unit of acetyl-CoA, which would be methylated in activated methylene groups to yield a bicyclic acid intermediate that could then either be converted to botrylactone derivatives or lose the starter acetate unit through a retro-Claisen type C-C bond cleavage to yield botcinin derivatives. The second polyketide synthase, BOA9, is probably required for the biosynthesis of the tetraketide side chain of botcinins. The methyltransferase (MT) domain within BOA6 is probably responsible for the incorporation of four methyl groups. The trans-enoyl reductase BOA5 might take over the enoyl reductase function of BOA6 that misses an ER domain. The monooxygenases BOA2, BOA3 and BOA4 might be involved in further hydroxylations at C4, C5 and C8, whereas BOA7, close to BOA9, could potentially be involved in the hydroxylation at C4 in the side chain of botcinins. This Botryotinia fuckeliana (strain B05.10) (Noble rot fungus) protein is Botcinic acid biosynthesis cluster B protein 12.